The primary structure comprises 244 residues: Sepiapterin reductase (244 aa).

Residues 9–15, 40–42, 66–67, and Asn-93 each bind NADP(+); these read GAGKGIG, SRT, and DI. Position 99 (Phe-99) interacts with substrate. Thr-116 serves as a coordination point for NADP(+). Residues Ser-145 and Tyr-158 each coordinate substrate. Residues Tyr-158, Lys-162, and 191-196 contribute to the NADP(+) site; that span reads VYTPMW. Trp-196 is a substrate binding site.

It belongs to the short-chain dehydrogenases/reductases (SDR) family. As to quaternary structure, homodimer.

It is found in the cytoplasm. The enzyme catalyses L-threo-7,8-dihydrobiopterin + NADP(+) = L-sepiapterin + NADPH + H(+). It carries out the reaction L-threo-tetrahydrobiopterin + 2 NADP(+) = 6-pyruvoyl-5,6,7,8-tetrahydropterin + 2 NADPH + 2 H(+). Slightly inhibited by N-acetyldopamine but not by N-acetylserotonin or melatonin. Catalyzes the final reductions in tetra-hydrobiopterin biosynthesis to form 5,6,7,8-tetrahydrobiopterin. The protein is Sepiapterin reductase of Chlorobaculum tepidum (strain ATCC 49652 / DSM 12025 / NBRC 103806 / TLS) (Chlorobium tepidum).